Consider the following 262-residue polypeptide: Ribonuclease 3 (262 aa).

Residues 18–141 (LATFLKNLDI…LVGAIYEDMG (124 aa)) form the RNase III domain. E59 contacts Mg(2+). The active site involves D63. The Mg(2+) site is built by D127 and E130. The active site involves E130.

This sequence belongs to the ribonuclease III family. Homodimer. Requires Mg(2+) as cofactor.

It is found in the cytoplasm. The catalysed reaction is Endonucleolytic cleavage to 5'-phosphomonoester.. Functionally, digests double-stranded RNA. Involved in the processing of primary rRNA transcript to yield the immediate precursors to the large and small rRNAs (23S and 16S). Processes some mRNAs, and tRNAs when they are encoded in the rRNA operon. Processes pre-crRNA and tracrRNA of type II CRISPR loci if present in the organism. This chain is Ribonuclease 3, found in Mycoplasma genitalium (strain ATCC 33530 / DSM 19775 / NCTC 10195 / G37) (Mycoplasmoides genitalium).